Reading from the N-terminus, the 369-residue chain is Extracellular signal-regulated kinase 2 (369 aa).

The Protein kinase domain occupies 14 to 304; sequence YEVLQKIGKG…AEEALAHPFV (291 aa). Residues 20-28 and Lys43 contribute to the ATP site; that span reads IGKGAYGIV. The Proton acceptor role is filled by Asp137. Position 176 is a phosphothreonine (Thr176). The short motif at 176–178 is the TXY element; the sequence is TEY. Tyr178 is modified (phosphotyrosine). Residues 346–369 are disordered; it reads KKKEERKKQTNPTKPDTTAPTLST. Positions 355-369 are enriched in polar residues; the sequence is TNPTKPDTTAPTLST.

The protein belongs to the protein kinase superfamily. CMGC Ser/Thr protein kinase family. MAP kinase subfamily. Requires Mg(2+) as cofactor. Post-translationally, dually phosphorylated on Thr-176 and Tyr-178, which activates the enzyme.

The catalysed reaction is L-seryl-[protein] + ATP = O-phospho-L-seryl-[protein] + ADP + H(+). The enzyme catalyses L-threonyl-[protein] + ATP = O-phospho-L-threonyl-[protein] + ADP + H(+). Activated by tyrosine and threonine phosphorylation. Functionally, implicated in the relay of the cAMP chemotactic signal and cell differentiation. Important for receptor-mediated activation of adenylyl cyclase. This is Extracellular signal-regulated kinase 2 (erkB) from Dictyostelium discoideum (Social amoeba).